A 386-amino-acid polypeptide reads, in one-letter code: tRNA-specific adenosine deaminase subunit tad2 (386 aa).

One can recognise a CMP/dCMP-type deaminase domain in the interval 212–322 (TQHETYMKLA…GNDRFGGCGS (111 aa)). His263 is a Zn(2+) binding site. The active-site Proton donor is the Glu265. Zn(2+)-binding residues include Cys293 and Cys296.

This sequence belongs to the cytidine and deoxycytidylate deaminase family. ADAT2 subfamily. As to quaternary structure, heterodimer with Tad3. Zn(2+) serves as cofactor.

The catalysed reaction is adenosine(34) in tRNA + H2O + H(+) = inosine(34) in tRNA + NH4(+). Functionally, structural subunit of tRNA-specific adenosine deaminase, which deaminates adenosine-34 (the first, also called wobble position of the anticodon) to inosine in many tRNAs. Inosine-34 allows the decoding of 3 different nucleotides at the third position of mRNA codons, as inosine is able to pair with U, C, and A. The wobble inosine tRNA modification is essential for cell cycle progression in the G1/S and G2/M transitions in fission yeast. The polypeptide is tRNA-specific adenosine deaminase subunit tad2 (tad2) (Schizosaccharomyces pombe (strain 972 / ATCC 24843) (Fission yeast)).